We begin with the raw amino-acid sequence, 974 residues long: Serine/threonine-protein kinase 10 (974 aa).

In terms of domain architecture, Protein kinase spans 37–295 (WEIIGELGDG…AAQLLEHPFV (259 aa)). ATP-binding positions include 43-51 (LGDGAFGKV) and lysine 66. The active-site Proton acceptor is aspartate 158. Residues 320–332 (EDNHEDGEDEDPA) are compositionally biased toward acidic residues. The segment at 320–479 (EDNHEDGEDE…EKEDHCEETQ (160 aa)) is disordered. The segment covering 343 to 353 (DPSQTSATSLN) has biased composition (polar residues). Basic and acidic residues-rich tracts occupy residues 382-406 (PLKEQEDNLSDKFQVEDHDKPESEA) and 458-477 (TMEKYLEKPKEPEKEDHCEE). Coiled coils occupy residues 605–729 (QKEQ…EEQK) and 870–950 (EKVK…EHLK).

It belongs to the protein kinase superfamily. STE Ser/Thr protein kinase family. STE20 subfamily. In terms of assembly, homodimer. Autophosphorylates.

Its subcellular location is the cell membrane. The enzyme catalyses L-seryl-[protein] + ATP = O-phospho-L-seryl-[protein] + ADP + H(+). It catalyses the reaction L-threonyl-[protein] + ATP = O-phospho-L-threonyl-[protein] + ADP + H(+). May act as a polo kinase kinase by mediating phosphorylation of plk1. This chain is Serine/threonine-protein kinase 10 (stk10), found in Danio rerio (Zebrafish).